We begin with the raw amino-acid sequence, 526 residues long: Radial spoke head protein 6 homolog A (526 aa).

3 disordered regions span residues 180 to 231 (EGED…EENG), 371 to 411 (VKSE…DAEI), and 469 to 526 (PPAP…EEDD). Composition is skewed to acidic residues over residues 181–212 (GEDD…EAED) and 374–395 (EEEE…EPEP). Residues 497 to 506 (QALKAAKEEA) show a composition bias toward basic and acidic residues. Positions 507-526 (EAAAEEMEEEEDEEEEEEDD) are enriched in acidic residues.

It belongs to the flagellar radial spoke RSP4/6 family. As to quaternary structure, component of sperm axonemal radial spoke complexes.

The protein resides in the cytoplasm. It is found in the cytoskeleton. Its subcellular location is the flagellum axoneme. Functions as part of radial spoke complexes in the axoneme of sperm flagella that play an important part in motility. The triple radial spokes (RS1, RS2 and RS3) are required to modulate beating of the sperm flagellum. In Xenopus tropicalis (Western clawed frog), this protein is Radial spoke head protein 6 homolog A (rsph6a).